The sequence spans 87 residues: UPF0250 protein BCc_307 (87 aa).

It belongs to the UPF0250 family.

The polypeptide is UPF0250 protein BCc_307 (Buchnera aphidicola subsp. Cinara cedri (strain Cc)).